The sequence spans 362 residues: Outer membrane porin protein OmpD (362 aa).

A signal peptide spans 1–21 (MKLKLVAVAVTSLLAAGVVNA).

The protein belongs to the Gram-negative porin family. In terms of assembly, homotrimer.

Its subcellular location is the cell outer membrane. Functionally, forms pores that allow passive diffusion of small molecules across the outer membrane. The chain is Outer membrane porin protein OmpD (ompD) from Salmonella choleraesuis (strain SC-B67).